Consider the following 216-residue polypeptide: MIVSTKLQDHFDKITKILSGFGVEGCISYGEITFSIRDQRDIHLILKKLKKEYLFEQLTDVTAVDYLTYGQSDWQVGKVVSQTGFSRGRQQDFKTAAVDNRFEIIYQLLSMANNVRIRVKCKLKDAQIILVDSVSDLWPSANWAEREVYDMFGIYFNNHPDLRRVLTDYGFVGHPLRKDFPQTGYVEMRYDENLGRVVYEPVEIDDRVNTPRVIRN.

Belongs to the complex I 30 kDa subunit family. In terms of assembly, NDH-1 is composed of 14 different subunits. Subunits NuoB, C, D, E, F, and G constitute the peripheral sector of the complex.

The protein resides in the cell inner membrane. The catalysed reaction is a quinone + NADH + 5 H(+)(in) = a quinol + NAD(+) + 4 H(+)(out). NDH-1 shuttles electrons from NADH, via FMN and iron-sulfur (Fe-S) centers, to quinones in the respiratory chain. The immediate electron acceptor for the enzyme in this species is believed to be ubiquinone. Couples the redox reaction to proton translocation (for every two electrons transferred, four hydrogen ions are translocated across the cytoplasmic membrane), and thus conserves the redox energy in a proton gradient. The chain is NADH-quinone oxidoreductase subunit C from Francisella tularensis subsp. tularensis (strain FSC 198).